The chain runs to 90 residues: MNIVRHRGIVYCDADFIISHRGEAIKDVVGRYPVLCCYNDVCYDPEREGVYDESNIHELRTIKLNDLDINRYPITRGLLFLTNQIVNAWM.

This is an uncharacterized protein from Thermoproteus tenax (TTV1).